The following is a 354-amino-acid chain: Yop proteins translocation protein U (354 aa).

A disordered region spans residues 1–20 (MSGEKTEQPTPKKIRDARKK). Helical transmembrane passes span 30–50 (VSTA…DYYF), 79–99 (VLLE…LMAI), 138–158 (VEFL…WIII), 163–183 (VTLL…LGQI), and 187–207 (LMVI…AFEY).

This sequence belongs to the type III secretion exporter family.

It is found in the cell membrane. Component of the yop secretion machinery. This Yersinia pestis protein is Yop proteins translocation protein U (yscU).